The chain runs to 152 residues: UPF0266 membrane protein YobD (152 aa).

Helical transmembrane passes span 6–26 (LVLI…QFIM), 45–65 (IDSV…VTNH), and 67–87 (ALIT…IFWI).

It belongs to the UPF0266 family.

The protein resides in the cell inner membrane. The protein is UPF0266 membrane protein YobD of Escherichia coli O127:H6 (strain E2348/69 / EPEC).